The primary structure comprises 527 residues: Peptide chain release factor 3 (527 aa).

Residues 9–277 (AKRRTFAIIS…CIVDWAPQPL (269 aa)) form the tr-type G domain. GTP-binding positions include 18 to 25 (SHPDAGKT), 86 to 90 (DTPGH), and 140 to 143 (NKLD).

Belongs to the TRAFAC class translation factor GTPase superfamily. Classic translation factor GTPase family. PrfC subfamily.

The protein resides in the cytoplasm. Functionally, increases the formation of ribosomal termination complexes and stimulates activities of RF-1 and RF-2. It binds guanine nucleotides and has strong preference for UGA stop codons. It may interact directly with the ribosome. The stimulation of RF-1 and RF-2 is significantly reduced by GTP and GDP, but not by GMP. In Pseudomonas paraeruginosa (strain DSM 24068 / PA7) (Pseudomonas aeruginosa (strain PA7)), this protein is Peptide chain release factor 3.